Reading from the N-terminus, the 317-residue chain is Cytochrome f (317 aa).

The first 31 residues, 1–31 (MIFKPQSFLKAIVLSMTITFAFNMSAPIASA), serve as a signal peptide directing secretion. Heme contacts are provided by Tyr-32, Cys-52, Cys-55, and His-56. The chain crosses the membrane as a helical span at residues 280 to 302 (PVRIQGLLAFFACILLAQILLVV).

It belongs to the cytochrome f family. As to quaternary structure, the 4 large subunits of the cytochrome b6-f complex are cytochrome b6, subunit IV (17 kDa polypeptide, petD), cytochrome f and the Rieske protein, while the 4 small subunits are PetG, PetL, PetM and PetN. The complex functions as a dimer. Heme is required as a cofactor.

Its subcellular location is the plastid. The protein resides in the chloroplast thylakoid membrane. Its function is as follows. Component of the cytochrome b6-f complex, which mediates electron transfer between photosystem II (PSII) and photosystem I (PSI), cyclic electron flow around PSI, and state transitions. This chain is Cytochrome f, found in Chlamydomonas subcaudata.